Reading from the N-terminus, the 192-residue chain is Fe/S biogenesis protein NfuA (192 aa).

Positions 149 and 152 each coordinate [4Fe-4S] cluster.

This sequence belongs to the NfuA family. In terms of assembly, homodimer. [4Fe-4S] cluster serves as cofactor.

Its function is as follows. Involved in iron-sulfur cluster biogenesis. Binds a 4Fe-4S cluster, can transfer this cluster to apoproteins, and thereby intervenes in the maturation of Fe/S proteins. Could also act as a scaffold/chaperone for damaged Fe/S proteins. The chain is Fe/S biogenesis protein NfuA from Shewanella baltica (strain OS223).